Consider the following 361-residue polypeptide: Septin-2 (361 aa).

Phosphotyrosine is present on Y17. Residues 34 to 306 form the Septin-type G domain; it reads KGFEFTLMVV…ENFRSERLKR (273 aa). A G1 motif region spans residues 44–51; the sequence is GESGLGKS. GTP contacts are provided by residues 44–52, T78, G104, and 183–186; these read GESGLGKST and KADT. A G3 motif region spans residues 101-104; it reads DTPG. A G4 motif region spans residues 182-185; it reads AKAD. Residue K190 is modified to N6-acetyllysine. Y211 is subject to Phosphotyrosine. Position 218 is a phosphoserine (S218). GTP-binding residues include G241, R256, and Y258. The segment at 260–270 is important for dimerization; the sequence is WGVVEVENPEH.

Belongs to the TRAFAC class TrmE-Era-EngA-EngB-Septin-like GTPase superfamily. Septin GTPase family. In terms of assembly, septins polymerize into heterooligomeric protein complexes that form filaments, and associate with cellular membranes, actin filaments and microtubules. GTPase activity is required for filament formation. Septin filaments are assembled from asymmetrical heterotrimers, composed of SEPTIN2, SEPTIN6 and SEPTIN7 that associate head-to-head to form a hexameric unit. Interaction between SEPTIN2 and SEPTIN7 seems indirect. Also interacts with SEPTIN9 and SEPTIN5. Interaction with SEPTIN4 not detected. Component of a septin core octameric complex consisting of SEPTIN12, SEPTIN7, SEPTIN6 and SEPTIN2 or SEPTIN4 in the order 12-7-6-2-2-6-7-12 or 12-7-6-4-4-6-7-12 and located in the sperm annulus. Interacts with MAP4. Interacts with DZIP1L. Widely expressed.

The protein localises to the cytoplasm. The protein resides in the cytoskeleton. It is found in the spindle. It localises to the chromosome. Its subcellular location is the centromere. The protein localises to the kinetochore. The protein resides in the cleavage furrow. It is found in the midbody. It localises to the cell cortex. Its subcellular location is the cell projection. The protein localises to the cilium membrane. The protein resides in the cilium. It is found in the flagellum. In terms of biological role, filament-forming cytoskeletal GTPase. Forms a filamentous structure with SEPTIN12, SEPTIN6, SEPTIN2 and probably SEPTIN4 at the sperm annulus which is required for the structural integrity and motility of the sperm tail during postmeiotic differentiation. Required for normal organization of the actin cytoskeleton. Plays a role in the biogenesis of polarized columnar-shaped epithelium by maintaining polyglutamylated microtubules, thus facilitating efficient vesicle transport, and by impeding MAP4 binding to tubulin. Required for the progression through mitosis. Forms a scaffold at the midplane of the mitotic splindle required to maintain CENPE localization at kinetochores and consequently chromosome congression. During anaphase, may be required for chromosome segregation and spindle elongation. Plays a role in ciliogenesis and collective cell movements. In cilia, required for the integrity of the diffusion barrier at the base of the primary cilium that prevents diffusion of transmembrane proteins between the cilia and plasma membranes: probably acts by regulating the assembly of the tectonic-like complex (also named B9 complex) by localizing TMEM231 protein. In Mus musculus (Mouse), this protein is Septin-2.